The primary structure comprises 393 residues: NAD(P)H-quinone oxidoreductase subunit H, chloroplastic (393 aa).

The protein belongs to the complex I 49 kDa subunit family. As to quaternary structure, NDH is composed of at least 16 different subunits, 5 of which are encoded in the nucleus.

Its subcellular location is the plastid. It localises to the chloroplast thylakoid membrane. It carries out the reaction a plastoquinone + NADH + (n+1) H(+)(in) = a plastoquinol + NAD(+) + n H(+)(out). It catalyses the reaction a plastoquinone + NADPH + (n+1) H(+)(in) = a plastoquinol + NADP(+) + n H(+)(out). In terms of biological role, NDH shuttles electrons from NAD(P)H:plastoquinone, via FMN and iron-sulfur (Fe-S) centers, to quinones in the photosynthetic chain and possibly in a chloroplast respiratory chain. The immediate electron acceptor for the enzyme in this species is believed to be plastoquinone. Couples the redox reaction to proton translocation, and thus conserves the redox energy in a proton gradient. This chain is NAD(P)H-quinone oxidoreductase subunit H, chloroplastic, found in Nicotiana tomentosiformis (Tobacco).